A 244-amino-acid polypeptide reads, in one-letter code: ATP synthase subunit a (244 aa).

7 helical membrane passes run 20–40 (FFDI…VIVI), 81–101 (GILF…LNVM), 113–133 (QLLV…IWGF), 140–160 (FLNI…LVFI), 176–196 (LFAN…AAIY), 202–222 (FIGI…LGIA), and 223–243 (FLQA…IINL).

It belongs to the ATPase A chain family. In terms of assembly, F-type ATPases have 2 components, CF(1) - the catalytic core - and CF(0) - the membrane proton channel. CF(1) has five subunits: alpha(3), beta(3), gamma(1), delta(1), epsilon(1). CF(0) has three main subunits: a, b and c.

It localises to the mitochondrion inner membrane. Mitochondrial membrane ATP synthase (F(1)F(0) ATP synthase or Complex V) produces ATP from ADP in the presence of a proton gradient across the membrane which is generated by electron transport complexes of the respiratory chain. F-type ATPases consist of two structural domains, F(1) - containing the extramembraneous catalytic core and F(0) - containing the membrane proton channel, linked together by a central stalk and a peripheral stalk. During catalysis, ATP synthesis in the catalytic domain of F(1) is coupled via a rotary mechanism of the central stalk subunits to proton translocation. Key component of the proton channel; it may play a direct role in the translocation of protons across the membrane. This is ATP synthase subunit a (atp6) from Dictyostelium discoideum (Social amoeba).